The sequence spans 236 residues: H2HPP isomerase (236 aa).

Cupin type-1 domains lie at 40 to 106 and 151 to 215; these read YVPP…AIDI and NIPG…SKSV. A divalent metal cation contacts are provided by His-50, His-52, Gln-56, His-91, His-162, His-164, Gln-168, and His-202. Tyr-223 serves as a coordination point for substrate.

As to quaternary structure, monomer. It depends on Fe(2+) as a cofactor. Co(2+) is required as a cofactor.

The protein localises to the cytoplasm. The catalysed reaction is 3-[(4R)-4-hydroxycyclohexa-1,5-dien-1-yl]-2-oxopropanoate = 3-[(1E,4R)-4-hydroxycyclohex-2-en-1-ylidene]pyruvate. It functions in the pathway antibiotic biosynthesis; bacilysin biosynthesis. Functionally, part of the bacABCDEF operon responsible for the biosynthesis of the nonribosomally synthesized dipeptide antibiotic bacilysin, composed of L-alanine and L-anticapsin. Bacilysin is an irreversible inactivator of the glutaminase domain of glucosamine synthetase. BacB catalyzes the allylic isomerization of the endocyclic-delta(4),delta(8)-7R-dihydro-hydroxyphenylpyruvate (en-H2HPP) to generate a mixture of 3E,7R- and 3Z, 7R-olefins of the exocyclic-delta(3),delta(5)-dihydro-hydroxyphenylpyruvate (ex-H2HPP). In Bacillus subtilis, this protein is H2HPP isomerase.